Reading from the N-terminus, the 355-residue chain is tRNA pseudouridine synthase D (355 aa).

Residue aspartate 84 is the Nucleophile of the active site. The region spanning 160–306 (GVPNYFGLQR…MAHERRILRL (147 aa)) is the TRUD domain.

This sequence belongs to the pseudouridine synthase TruD family.

The catalysed reaction is uridine(13) in tRNA = pseudouridine(13) in tRNA. Its function is as follows. Responsible for synthesis of pseudouridine from uracil-13 in transfer RNAs. The polypeptide is tRNA pseudouridine synthase D (Pseudomonas aeruginosa (strain UCBPP-PA14)).